The primary structure comprises 213 residues: MDSKKGILVAIGGGSCSGKTTIADMIYQLLRKKLKVAILPQDNYYKPYKNKSMAQRKAINFDHPDAFDWKLLWSHLDNLLMGKTVAVPMYDYVNYTRKKETIEIGPLNVVILEGLMPWFDERIAKLCKLKIFVEATGEERLIRRIERDWERGRDVASIIKQWREAVSPMYEIFVEKMKQKADLIIPWSERHEVSTNVLDFAIEHLFRKHVDPN.

13–20 (GGSCSGKT) is an ATP binding site.

It belongs to the uridine kinase family.

Its subcellular location is the cytoplasm. The catalysed reaction is uridine + ATP = UMP + ADP + H(+). It carries out the reaction cytidine + ATP = CMP + ADP + H(+). It participates in pyrimidine metabolism; CTP biosynthesis via salvage pathway; CTP from cytidine: step 1/3. The protein operates within pyrimidine metabolism; UMP biosynthesis via salvage pathway; UMP from uridine: step 1/1. The chain is Uridine kinase (udk) from Mycoplasma pneumoniae (strain ATCC 29342 / M129 / Subtype 1) (Mycoplasmoides pneumoniae).